Reading from the N-terminus, the 882-residue chain is Molybdenum cofactor sulfurase (882 aa).

An N6-(pyridoxal phosphate)lysine modification is found at K265. Residue C425 is part of the active site. A disordered region spans residues 496 to 546 (GQPLPLATPGEAGAPPEDSEAQNAVPAARARGSSSPQEDTSPHSGVWNNSP). Residues 527 to 546 (GSSSPQEDTSPHSGVWNNSP) are compositionally biased toward polar residues. Phosphoserine occurs at positions 528 and 530. In terms of domain architecture, MOSC spans 707 to 868 (KQSSDFQRNA…LSVGSQVLPL (162 aa)).

The protein belongs to the class-V pyridoxal-phosphate-dependent aminotransferase family. MOCOS subfamily. The cofactor is pyridoxal 5'-phosphate. In terms of tissue distribution, ubiquitously expressed.

The catalysed reaction is Mo-molybdopterin + L-cysteine + AH2 = thio-Mo-molybdopterin + L-alanine + A + H2O. It participates in cofactor biosynthesis; molybdopterin biosynthesis. Functionally, sulfurates the molybdenum cofactor. Sulfation of molybdenum is essential for xanthine dehydrogenase (XDH) and aldehyde oxidase (ADO) enzymes in which molybdenum cofactor is liganded by 1 oxygen and 1 sulfur atom in active form. This chain is Molybdenum cofactor sulfurase, found in Bos taurus (Bovine).